A 164-amino-acid polypeptide reads, in one-letter code: Inner membrane assembly complex subunit 17 (164 aa).

Residues 1–28 (MIKTAKISTLRLAITRNARNLSFTTLVR) constitute a mitochondrion transit peptide. Residues 29–97 (SPEVDNSKIK…NEVPLKRFTR (69 aa)) lie on the Mitochondrial matrix side of the membrane. Residues 98 to 118 (PLWIFILMASTFYLGAHLVWW) form a helical membrane-spanning segment. The Mitochondrial intermembrane portion of the chain corresponds to 119 to 164 (KLAYEKKEVELKHKVDSLETTLKDVMKEKATGPTPCNNKKSWYKFW). The stretch at 121–149 (AYEKKEVELKHKVDSLETTLKDVMKEKAT) forms a coiled coil.

It belongs to the INA17 family. As to quaternary structure, component of the inner membrane assembly (INA) complex, composed of INA17 and INA22. Interacts with a subset of F(1)F(0)-ATP synthase subunits of the F(1)-domain and the peripheral stalk.

It is found in the mitochondrion inner membrane. Its function is as follows. Component of the INA complex (INAC) that promotes the biogenesis of mitochondrial F(1)F(0)-ATP synthase. INAC facilitates the assembly of the peripheral stalk and promotes the assembly of the catalytic F(1)-domain with the membrane-embedded F(0)-domain. The protein is Inner membrane assembly complex subunit 17 of Candida glabrata (strain ATCC 2001 / BCRC 20586 / JCM 3761 / NBRC 0622 / NRRL Y-65 / CBS 138) (Yeast).